Here is a 1040-residue protein sequence, read N- to C-terminus: DIS3-like exonuclease 1 (1040 aa).

In terms of domain architecture, CSD1 spans 232–310 (AGIKSGRYKQ…KGRTGALCEN (79 aa)). A CSD2 domain is found at 360-426 (VLVMPWDYRI…AEIATILVEN (67 aa)). The RNB domain maps to 459-808 (RLDLRETHLV…VHRLLLAAVN (350 aa)).

Belongs to the RNR ribonuclease family. Component of the RNA exosome complex. The cofactor is Mg(2+).

Its subcellular location is the cytoplasm. The enzyme catalyses Exonucleolytic cleavage in the 3'- to 5'-direction to yield nucleoside 5'-phosphates.. In terms of biological role, catalytic component of the RNA exosome complex which has 3'-&gt;5' exoribonuclease activity and participates in a multitude of cellular RNA processing and degradation events. The protein is DIS3-like exonuclease 1 (dis3l) of Xenopus laevis (African clawed frog).